Reading from the N-terminus, the 246-residue chain is MSVISMKQLLEAGVHFGHQTRRWNPKMKRYIFTERNGIYIIDLQKTVKKVEEAYNFTKNLAADGGKILFVGTKKQAQDSVKEEAERSGMYYVNQRWLGGTLTNFETIQKRIKRLKDIEKMQENGTFDVLPKKEVVQLKKELERLEKFLGGIKEMKELPDALFIIDPRKERIAVAEARKLNIPIIGIVDTNCDPDEIDVVIPANDDAIRAVKLLTSKMADAILEAKQGEESAETEAKEAETTETTTA.

Positions Ala-224 to Ala-246 are disordered. Residues Lys-225 to Glu-239 are compositionally biased toward basic and acidic residues.

It belongs to the universal ribosomal protein uS2 family.

In Bacillus licheniformis (strain ATCC 14580 / DSM 13 / JCM 2505 / CCUG 7422 / NBRC 12200 / NCIMB 9375 / NCTC 10341 / NRRL NRS-1264 / Gibson 46), this protein is Small ribosomal subunit protein uS2.